The chain runs to 369 residues: MELVAGCYEQILFGFAARPGEPWTVTPDFTHHAHTASLSAVAVNSKYVVTGSRDESIQIYDMRKKVEHGALLQHNGTITCLEFYGTAHLLSGAEDGLICIWNTKRWECLKSIKAHKGHVTSLSIHPSGKLALSVGTDKTLRTWNLVEGRSAFIKNLKQNAHIIKWSPDGEKYVTVITNKVDIYKLDTASITGTITIEKRISSIRFITDSVLAIAGDDEIIRFYSCDSQKCLCEFKARENRIKDIYSFEREGQHVIVTASSDGYIKVWNLDLNKINNVPSLLCEVSTKARLTCLAVWLDQASEMKENCGKAATSTEANESEKPSAVKKKKVCGMNKSGKLTKQRRRIVPAKRKLEAPLQKKKKKKQNSSE.

5 WD repeats span residues 33–70 (AHTA…EHGA), 73–111 (QHNG…CLKS), 114–153 (AHKG…SAFI), 195–233 (TIEK…CLCE), and 236–278 (AREN…NNVP). Positions 311-369 (ATSTEANESEKPSAVKKKKVCGMNKSGKLTKQRRRIVPAKRKLEAPLQKKKKKKQNSSE) are disordered. Composition is skewed to basic residues over residues 338 to 350 (KLTK…VPAK) and 358 to 369 (QKKKKKKQNSSE).

The protein resides in the nucleus. It localises to the nucleolus. Its function is as follows. Negatively regulates the PAK1 kinase. PAK1 is a member of the PAK kinase family, which has been shown to play a positive role in the regulation of signaling pathways involving MAPK8 and RELA. PAK1 exists as an inactive homodimer, which is activated by binding of small GTPases such as CDC42 to an N-terminal regulatory domain. PAK1IP1 also binds to the N-terminus of PAK1, and inhibits the specific activation of PAK1 by CDC42. May be involved in ribosomal large subunit assembly. The polypeptide is p21-activated protein kinase-interacting protein 1-like (PAK1IP1) (Gallus gallus (Chicken)).